A 601-amino-acid polypeptide reads, in one-letter code: Glutamine--fructose-6-phosphate aminotransferase [isomerizing] (601 aa).

Cys2 functions as the Nucleophile; for GATase activity in the catalytic mechanism. A Glutamine amidotransferase type-2 domain is found at 2–218; sequence CGIVGYIGYD…DHEIVIVKKD (217 aa). SIS domains are found at residues 284 to 423 and 453 to 591; these read IIND…EHGR and IATD…VDKP. The active-site For Fru-6P isomerization activity is Lys596.

In terms of assembly, homodimer.

The protein localises to the cytoplasm. The enzyme catalyses D-fructose 6-phosphate + L-glutamine = D-glucosamine 6-phosphate + L-glutamate. Its function is as follows. Catalyzes the first step in hexosamine metabolism, converting fructose-6P into glucosamine-6P using glutamine as a nitrogen source. This Staphylococcus aureus (strain COL) protein is Glutamine--fructose-6-phosphate aminotransferase [isomerizing].